We begin with the raw amino-acid sequence, 914 residues long: Zinc finger protein 717 (914 aa).

Residues Val-22–Ala-93 enclose the KRAB domain. The C2H2-type 1; degenerate zinc-finger motif lies at Phe-209 to His-231. The C2H2-type 2; degenerate zinc finger occupies Arg-266–His-277. The segment at Tyr-283–Pro-305 adopts a C2H2-type 3; degenerate zinc-finger fold. 12 C2H2-type zinc fingers span residues Tyr-311–His-333, Tyr-339–His-361, Tyr-367–His-389, Tyr-395–His-417, Tyr-423–His-445, Tyr-451–His-473, Tyr-479–His-501, Tyr-507–His-529, Tyr-535–His-557, Tyr-563–His-585, Tyr-591–His-613, and Tyr-619–His-641. Residues Cys-649 to His-669 form a C2H2-type 16; degenerate zinc finger. Residues Gln-741–His-752 form a C2H2-type 17; degenerate zinc finger. 5 consecutive C2H2-type zinc fingers follow at residues Tyr-758 to His-780, Tyr-786 to His-808, Phe-814 to His-836, Phe-842 to His-864, and Tyr-870 to His-892.

It belongs to the krueppel C2H2-type zinc-finger protein family.

The protein localises to the nucleus. May be involved in transcriptional regulation. This is Zinc finger protein 717 from Homo sapiens (Human).